Consider the following 307-residue polypeptide: Peroxisomal protein PEX21 (307 aa).

Cys4 is covalently cross-linked (Glycyl cysteine thioester (Cys-Gly) (interchain with G-Cter in ubiquitin)). Positions 23–52 (VGRVGGFNRPSGGLGQSSAEQQLQARAGER) are disordered.

It belongs to the peroxin-21 family. Interacts with PEX7. Monoubiquitinated at Cys-4; acts as a signal for PEX21 extraction and is required for proper export from peroxisomes and recycling.

Its subcellular location is the cytoplasm. The protein localises to the cytosol. The protein resides in the peroxisome. Functionally, mediates peroxisomal import of proteins containing a C-terminal PTS2-type peroxisomal targeting signal via its interaction with PEX7. Interaction with PEX7 only takes place when PEX7 is associated with cargo proteins containing a PTS2 peroxisomal targeting signal. PEX7 along with PTS2-containing cargo proteins are then translocated through the PEX13-PEX14 docking complex together with PEX21. In Eremothecium gossypii (strain ATCC 10895 / CBS 109.51 / FGSC 9923 / NRRL Y-1056) (Yeast), this protein is Peroxisomal protein PEX21 (PEX21).